A 335-amino-acid polypeptide reads, in one-letter code: Mesoderm-specific transcript homolog protein (335 aa).

3 consecutive transmembrane segments (helical) span residues 13–33, 88–108, and 266–286; these read WWVQ…HIPP, IWEG…LGFG, and VGAL…LDPV. In terms of domain architecture, AB hydrolase-1 spans 71–310; sequence IVVLLHGFPT…PRSTVSILDD (240 aa). The short motif at 98 to 103 is the RVIALD element; sequence RVIALD.

Belongs to the AB hydrolase superfamily. In terms of tissue distribution, no detectable transcripts during preimplantation development. Isoform 1 was not detected in either in vitro-matured oocytes (IVF) or parthenogenetically activated (PA) blastocyst. Isoform 2 was expressed in IVF and PA blastocysts.

Its subcellular location is the endoplasmic reticulum membrane. In Bos taurus (Bovine), this protein is Mesoderm-specific transcript homolog protein (MEST).